We begin with the raw amino-acid sequence, 255 residues long: tRNA (guanine-N(1)-)-methyltransferase (255 aa).

Residues Gly-113 and Ile-133–Leu-138 contribute to the S-adenosyl-L-methionine site.

This sequence belongs to the RNA methyltransferase TrmD family. Homodimer.

The protein resides in the cytoplasm. The enzyme catalyses guanosine(37) in tRNA + S-adenosyl-L-methionine = N(1)-methylguanosine(37) in tRNA + S-adenosyl-L-homocysteine + H(+). Specifically methylates guanosine-37 in various tRNAs. This Escherichia coli O6:K15:H31 (strain 536 / UPEC) protein is tRNA (guanine-N(1)-)-methyltransferase.